The chain runs to 173 residues: ATP-dependent protease subunit HslV (173 aa).

Threonine 2 is a catalytic residue. Na(+) contacts are provided by glycine 158, aspartate 161, and serine 164.

Belongs to the peptidase T1B family. HslV subfamily. In terms of assembly, a double ring-shaped homohexamer of HslV is capped on each side by a ring-shaped HslU homohexamer. The assembly of the HslU/HslV complex is dependent on binding of ATP.

The protein resides in the cytoplasm. It catalyses the reaction ATP-dependent cleavage of peptide bonds with broad specificity.. Allosterically activated by HslU binding. Protease subunit of a proteasome-like degradation complex believed to be a general protein degrading machinery. This chain is ATP-dependent protease subunit HslV, found in Actinobacillus pleuropneumoniae serotype 5b (strain L20).